A 128-amino-acid polypeptide reads, in one-letter code: Translation initiation factor 5A (128 aa).

Lysine 35 carries the post-translational modification Hypusine.

Belongs to the eIF-5A family.

It is found in the cytoplasm. In terms of biological role, functions by promoting the formation of the first peptide bond. The protein is Translation initiation factor 5A (eif5a) of Archaeoglobus fulgidus (strain ATCC 49558 / DSM 4304 / JCM 9628 / NBRC 100126 / VC-16).